A 271-amino-acid chain; its full sequence is Hachiman protein HamA (271 aa).

In terms of biological role, component of antiviral defense system Hachiman, composed of HamA and HamB. Expression of Hachiman in B.subtilis (strain BEST7003) confers resistance to phages phi105, phi29, phi3T, rho14, SBSphiJ, SpBeta and SPR. The sequence is that of Hachiman protein HamA from Bacillus cereus.